A 138-amino-acid chain; its full sequence is Large ribosomal subunit protein mL54 (138 aa).

The transit peptide at 1-14 directs the protein to the mitochondrion; the sequence is MATKRLFGATRTWA.

Belongs to the mitochondrion-specific ribosomal protein mL54 family. Component of the mitochondrial large ribosomal subunit (mt-LSU). Mature mammalian 55S mitochondrial ribosomes consist of a small (28S) and a large (39S) subunit. The 28S small subunit contains a 12S ribosomal RNA (12S mt-rRNA) and 30 different proteins. The 39S large subunit contains a 16S rRNA (16S mt-rRNA), a copy of mitochondrial valine transfer RNA (mt-tRNA(Val)), which plays an integral structural role, and 52 different proteins.

The protein resides in the mitochondrion. The polypeptide is Large ribosomal subunit protein mL54 (MRPL54) (Homo sapiens (Human)).